We begin with the raw amino-acid sequence, 372 residues long: uncharacterized protein (372 aa).

Residues 38–270 form the PNPLA domain; that stretch reads FFIEGGGTKG…ANNIPLDYLI (233 aa). The GXGXXG signature appears at 42–47; that stretch reads GGGTKG. The short motif at 74–78 is the GXSXG element; the sequence is GTSVG. The active-site Nucleophile is the Ser76. The active-site Proton acceptor is Asp257. The DGA/G motif lies at 257–259; it reads DGG.

Its function is as follows. Probable lipid hydrolase. This is an uncharacterized protein from Acanthamoeba polyphaga (Amoeba).